The primary structure comprises 262 residues: Tryptophan synthase alpha chain (262 aa).

Catalysis depends on proton acceptor residues glutamate 48 and aspartate 59.

Belongs to the TrpA family. As to quaternary structure, tetramer of two alpha and two beta chains.

It catalyses the reaction (1S,2R)-1-C-(indol-3-yl)glycerol 3-phosphate + L-serine = D-glyceraldehyde 3-phosphate + L-tryptophan + H2O. Its pathway is amino-acid biosynthesis; L-tryptophan biosynthesis; L-tryptophan from chorismate: step 5/5. In terms of biological role, the alpha subunit is responsible for the aldol cleavage of indoleglycerol phosphate to indole and glyceraldehyde 3-phosphate. The protein is Tryptophan synthase alpha chain of Helicobacter pylori (strain P12).